Consider the following 406-residue polypeptide: Transcriptional activator NprA (406 aa).

TPR repeat units follow at residues 125 to 158 (YYYYKFLGLLYYCKEKYEDALEYYKKAEQRFRSQ), 206 to 239 (AECHILLGICYRRYGEVDQAIECYSLAHKIAQII), 246 to 279 (GTIEHNLGYLMSMKHEHYEAIQHYKKSLLYKRNS), and 285 to 318 (FITLFSLIKEYYVSKNYKKALANVEESLQLLKRE).

Activates the transcription of nprS by about five fold. May bind to the upstream region of nprS promoter. The chain is Transcriptional activator NprA (nprA) from Geobacillus stearothermophilus (Bacillus stearothermophilus).